A 306-amino-acid chain; its full sequence is MQLRQVIIAYKAGDPTSKAAADDCAHCLESQGIHVMLGPSGARDNPFPVFLASATEPIDLAIVLGGDGTVLAAARHLSDAGIPLLTFNVGGHLGFLTQPRDFFQPEAELWDRLRNDQYAVEQRMMLAASLHEGGRENREPISETYYALNDMCVKPAAPDRMSVCILEMEVDGEIIDQYQGDGLIVSTPTGSTCYTAAAHGPIVHPGVDALAVTPICAMSLSSRPIVIPPRSVVSVWPLGTQDPTIKLWMDGVLATSIWPGQRVDIRMAEKPAQFLVLDSDRSFYRILREKLQWAGAVIHYNNNFRN.

D67 (proton acceptor) is an active-site residue. Residues 67-68 (DG), 149-150 (ND), and D181 contribute to the NAD(+) site.

This sequence belongs to the NAD kinase family. A divalent metal cation serves as cofactor.

Its subcellular location is the cytoplasm. The catalysed reaction is NAD(+) + ATP = ADP + NADP(+) + H(+). Involved in the regulation of the intracellular balance of NAD and NADP, and is a key enzyme in the biosynthesis of NADP. Catalyzes specifically the phosphorylation on 2'-hydroxyl of the adenosine moiety of NAD to yield NADP. The chain is NAD kinase 1 from Synechococcus sp. (strain ATCC 27144 / PCC 6301 / SAUG 1402/1) (Anacystis nidulans).